The primary structure comprises 367 residues: MTIINRKTAPALLALALFGGAAQAALVPPQGYYEGIEKLKSSDGDFRCEAAPRPYTGSLRFRSKYEGSDKARATLNVASEKAFRASTKDITTLEKGVSKMVGQYMRDGRPAQLDCALTWLGTWARADALMSSDYNHTGKSMRKWALGSMSGSWLRLKFSNSQPLAAHQAEAEQIEKWFARLAQQTVRDWSGLPLEKINNHSYWAAWSVMATAVATDRRDLFDWAVKEYKVGANQVDEQGFLPNELKRRQRALAYHNYALPPLAMIASFAQANGVDLRKENNFALQRLGEGVLAGARDPSQFTAHAGVKQDLHDLKIDSKYAWLEPWCALYHCVGDTLERKHDMQPFDSFRLGGDVTRVYDPGAESKK.

Positions 1-24 (MTIINRKTAPALLALALFGGAAQA) are cleaved as a signal peptide. Residues 63-64 (SK), 136-137 (HT), and tyrosine 254 contribute to the substrate site.

This sequence belongs to the polysaccharide lyase 5 family.

The protein localises to the periplasm. It catalyses the reaction Eliminative cleavage of alginate to give oligosaccharides with 4-deoxy-alpha-L-erythro-hex-4-enuronosyl groups at their non-reducing ends and beta-D-mannuronate at their reducing end.. In terms of biological role, catalyzes the depolymerization of alginate by cleaving the beta-1,4 glycosidic bond between two adjacent sugar residues via a beta-elimination mechanism. May serve to degrade mislocalized alginate that is trapped in the periplasmic space. The sequence is that of Alginate lyase from Pseudomonas entomophila (strain L48).